The following is a 76-amino-acid chain: MSVSTKRLEMDEEAEEAFDLFDVTHKGYIDFEDLRRSCAQLGENLTKEQLQLMLDLAGTNGKVSREEFAELWIHIS.

EF-hand domains follow at residues Glu-9 to Asn-44 and Glu-43 to Ser-76.

Its subcellular location is the cytoplasm. The protein resides in the nucleus. This is an uncharacterized protein from Schizosaccharomyces pombe (strain 972 / ATCC 24843) (Fission yeast).